We begin with the raw amino-acid sequence, 444 residues long: Glutamyl-tRNA reductase (444 aa).

Residues threonine 49–arginine 52, serine 109, glutamate 114–glutamine 116, and glutamine 120 each bind substrate. The active-site Nucleophile is the cysteine 50. Residue glycine 189–glycine 194 participates in NADP(+) binding.

This sequence belongs to the glutamyl-tRNA reductase family. In terms of assembly, homodimer.

The enzyme catalyses (S)-4-amino-5-oxopentanoate + tRNA(Glu) + NADP(+) = L-glutamyl-tRNA(Glu) + NADPH + H(+). Its pathway is porphyrin-containing compound metabolism; protoporphyrin-IX biosynthesis; 5-aminolevulinate from L-glutamyl-tRNA(Glu): step 1/2. Functionally, catalyzes the NADPH-dependent reduction of glutamyl-tRNA(Glu) to glutamate 1-semialdehyde (GSA). This is Glutamyl-tRNA reductase from Bacillus cereus (strain 03BB102).